The chain runs to 209 residues: uncharacterized protein (209 aa).

The N-terminal stretch at 1-17 (MKRLVTGLLALSLFLAA) is a signal peptide. The disordered stretch occupies residues 17–105 (ACGQDSDQQK…SNNQANNNQK (89 aa)). Residue Cys18 is the site of N-palmitoyl cysteine attachment. Cys18 carries S-diacylglycerol cysteine lipidation. Positions 23-70 (DQQKDGNKEKDDKAKTEQQDKKTNDSSKDKKDNKDDSKDVNKDNKDNS) are enriched in basic and acidic residues. Low complexity predominate over residues 71-105 (ANDNQQQSNSNATNNDQNQTNNNQSSNNQANNNQK).

The protein localises to the cell membrane. This is an uncharacterized protein from Staphylococcus aureus (strain COL).